Here is a 454-residue protein sequence, read N- to C-terminus: Probable glycine dehydrogenase (decarboxylating) subunit 1 (454 aa).

The protein belongs to the GcvP family. N-terminal subunit subfamily. In terms of assembly, the glycine cleavage system is composed of four proteins: P, T, L and H. In this organism, the P 'protein' is a heterodimer of two subunits.

It carries out the reaction N(6)-[(R)-lipoyl]-L-lysyl-[glycine-cleavage complex H protein] + glycine + H(+) = N(6)-[(R)-S(8)-aminomethyldihydrolipoyl]-L-lysyl-[glycine-cleavage complex H protein] + CO2. Functionally, the glycine cleavage system catalyzes the degradation of glycine. The P protein binds the alpha-amino group of glycine through its pyridoxal phosphate cofactor; CO(2) is released and the remaining methylamine moiety is then transferred to the lipoamide cofactor of the H protein. The sequence is that of Probable glycine dehydrogenase (decarboxylating) subunit 1 from Sorangium cellulosum (strain So ce56) (Polyangium cellulosum (strain So ce56)).